Reading from the N-terminus, the 345-residue chain is S-adenosylmethionine:tRNA ribosyltransferase-isomerase (345 aa).

Belongs to the QueA family. In terms of assembly, monomer.

It is found in the cytoplasm. The catalysed reaction is 7-aminomethyl-7-carbaguanosine(34) in tRNA + S-adenosyl-L-methionine = epoxyqueuosine(34) in tRNA + adenine + L-methionine + 2 H(+). It functions in the pathway tRNA modification; tRNA-queuosine biosynthesis. Functionally, transfers and isomerizes the ribose moiety from AdoMet to the 7-aminomethyl group of 7-deazaguanine (preQ1-tRNA) to give epoxyqueuosine (oQ-tRNA). This chain is S-adenosylmethionine:tRNA ribosyltransferase-isomerase, found in Shewanella loihica (strain ATCC BAA-1088 / PV-4).